A 391-amino-acid chain; its full sequence is 3-ketoacyl-CoA thiolase (391 aa).

Catalysis depends on C95, which acts as the Acyl-thioester intermediate. Residues H347 and C377 each act as proton acceptor in the active site.

Belongs to the thiolase-like superfamily. Thiolase family. In terms of assembly, heterotetramer of two alpha chains (FadB) and two beta chains (FadA).

The protein localises to the cytoplasm. It catalyses the reaction an acyl-CoA + acetyl-CoA = a 3-oxoacyl-CoA + CoA. It functions in the pathway lipid metabolism; fatty acid beta-oxidation. In terms of biological role, catalyzes the final step of fatty acid oxidation in which acetyl-CoA is released and the CoA ester of a fatty acid two carbons shorter is formed. This Ectopseudomonas mendocina (strain ymp) (Pseudomonas mendocina) protein is 3-ketoacyl-CoA thiolase.